The primary structure comprises 249 residues: 14-3-3-like protein D (249 aa).

It belongs to the 14-3-3 family.

This chain is 14-3-3-like protein D, found in Nicotiana tabacum (Common tobacco).